The following is a 332-amino-acid chain: UPF0194 membrane protein YbhG (332 aa).

An N-terminal signal peptide occupies residues 1–26 (MMKKPVVIELAVVVLAAVVAGGYWWY). Residues 108–209 (EEIAQAAAAV…LNLQDSTLIA (102 aa)) are a coiled coil.

This sequence belongs to the UPF0194 family.

It is found in the periplasm. The sequence is that of UPF0194 membrane protein YbhG (ybhG) from Shigella sonnei (strain Ss046).